The following is a 334-amino-acid chain: Beta-hexosaminidase (334 aa).

Residues aspartate 62, arginine 70, arginine 130, and 160 to 161 each bind substrate; that span reads KH. The active-site Proton donor/acceptor is the histidine 173. Aspartate 243 serves as the catalytic Nucleophile.

Belongs to the glycosyl hydrolase 3 family. NagZ subfamily.

The protein localises to the cytoplasm. It carries out the reaction Hydrolysis of terminal non-reducing N-acetyl-D-hexosamine residues in N-acetyl-beta-D-hexosaminides.. It functions in the pathway cell wall biogenesis; peptidoglycan recycling. Its function is as follows. Plays a role in peptidoglycan recycling by cleaving the terminal beta-1,4-linked N-acetylglucosamine (GlcNAc) from peptide-linked peptidoglycan fragments, giving rise to free GlcNAc, anhydro-N-acetylmuramic acid and anhydro-N-acetylmuramic acid-linked peptides. This chain is Beta-hexosaminidase, found in Photobacterium profundum (strain SS9).